A 376-amino-acid chain; its full sequence is MYKLLKKDGSSRRGEFSTPHGVVQTPVFMNVGTLAAIKGAVSTEDLKEIGCQIELSNTYHLSLRPGDEVIRKLGGLHKFMNWDRPILTDSGGFQVFSLSGMRKIKEEGVYFNSHIDGRKIFMGPEESMRIQSNLASTVAMAFDECVENPAPKEYVEDSVKRTTRWLKRCKIEIDRLNSMPHTINNKQMLFGINQGGVHDDIRMEHAKIISDMDLDGYAIGGLAVGETHEEMYRVLEKVVPNLPENKPIYLMGVGTPANILEAVERGVDFFDCVMPSRNGRHSHVFTSYGVIHLLNAKYELDDNPIDSECSCPTCKNYTRAYIRHLFKAKEMLAMRLCVIHNLYFYNNLMKEIRESIDKGNFLQYKKEKLEKWNETV.

Residue Asp89 is the Proton acceptor of the active site. Residues 89-93, Asp143, Gln194, and Gly221 each bind substrate; that span reads DSGGF. The interval 252-258 is RNA binding; that stretch reads GVGTPAN. Asp271 (nucleophile) is an active-site residue. Residues Cys309, Cys311, Cys314, and His340 each contribute to the Zn(2+) site.

Belongs to the queuine tRNA-ribosyltransferase family. In terms of assembly, homodimer. Within each dimer, one monomer is responsible for RNA recognition and catalysis, while the other monomer binds to the replacement base PreQ1. The cofactor is Zn(2+).

It catalyses the reaction 7-aminomethyl-7-carbaguanine + guanosine(34) in tRNA = 7-aminomethyl-7-carbaguanosine(34) in tRNA + guanine. It participates in tRNA modification; tRNA-queuosine biosynthesis. Functionally, catalyzes the base-exchange of a guanine (G) residue with the queuine precursor 7-aminomethyl-7-deazaguanine (PreQ1) at position 34 (anticodon wobble position) in tRNAs with GU(N) anticodons (tRNA-Asp, -Asn, -His and -Tyr). Catalysis occurs through a double-displacement mechanism. The nucleophile active site attacks the C1' of nucleotide 34 to detach the guanine base from the RNA, forming a covalent enzyme-RNA intermediate. The proton acceptor active site deprotonates the incoming PreQ1, allowing a nucleophilic attack on the C1' of the ribose to form the product. After dissociation, two additional enzymatic reactions on the tRNA convert PreQ1 to queuine (Q), resulting in the hypermodified nucleoside queuosine (7-(((4,5-cis-dihydroxy-2-cyclopenten-1-yl)amino)methyl)-7-deazaguanosine). The chain is Queuine tRNA-ribosyltransferase from Clostridium kluyveri (strain NBRC 12016).